The sequence spans 138 residues: Putative nickel-responsive regulator (138 aa).

Ni(2+) is bound by residues histidine 78, histidine 89, histidine 91, and cysteine 97.

The protein belongs to the transcriptional regulatory CopG/NikR family. Requires Ni(2+) as cofactor.

Its function is as follows. Transcriptional regulator. The sequence is that of Putative nickel-responsive regulator from Thermococcus kodakarensis (strain ATCC BAA-918 / JCM 12380 / KOD1) (Pyrococcus kodakaraensis (strain KOD1)).